The primary structure comprises 399 residues: Acetate kinase (399 aa).

A Mg(2+)-binding site is contributed by Asn10. Lys17 contributes to the ATP binding site. Arg91 is a substrate binding site. Residue Asp150 is the Proton donor/acceptor of the active site. ATP is bound by residues 210–214 (HLGNG), 285–287 (DFR), and 333–337 (GIGEN). Mg(2+) is bound at residue Glu387.

The protein belongs to the acetokinase family. In terms of assembly, homodimer. It depends on Mg(2+) as a cofactor. Requires Mn(2+) as cofactor.

It localises to the cytoplasm. It catalyses the reaction acetate + ATP = acetyl phosphate + ADP. It functions in the pathway metabolic intermediate biosynthesis; acetyl-CoA biosynthesis; acetyl-CoA from acetate: step 1/2. Its function is as follows. Catalyzes the formation of acetyl phosphate from acetate and ATP. Can also catalyze the reverse reaction. In Wigglesworthia glossinidia brevipalpis, this protein is Acetate kinase.